A 397-amino-acid chain; its full sequence is 2,3-bisphosphoglycerate-independent phosphoglycerate mutase (397 aa).

It belongs to the BPG-independent phosphoglycerate mutase family. A-PGAM subfamily.

It catalyses the reaction (2R)-2-phosphoglycerate = (2R)-3-phosphoglycerate. It participates in carbohydrate degradation; glycolysis; pyruvate from D-glyceraldehyde 3-phosphate: step 3/5. Catalyzes the interconversion of 2-phosphoglycerate and 3-phosphoglycerate. In Methanosarcina acetivorans (strain ATCC 35395 / DSM 2834 / JCM 12185 / C2A), this protein is 2,3-bisphosphoglycerate-independent phosphoglycerate mutase.